The sequence spans 647 residues: Acetyl-coenzyme A synthetase (647 aa).

Residues 190 to 193 (RGGK), T310, and N334 each bind CoA. ATP is bound by residues 386–388 (GEP), 410–415 (DTWWQT), D499, and R514. S522 serves as a coordination point for CoA. R525 provides a ligand contact to ATP. 3 residues coordinate Mg(2+): V536, H538, and V541. Residue R583 participates in CoA binding. The residue at position 608 (K608) is an N6-acetyllysine.

It belongs to the ATP-dependent AMP-binding enzyme family. Mg(2+) is required as a cofactor. Post-translationally, acetylated. Deacetylation by the SIR2-homolog deacetylase activates the enzyme.

The catalysed reaction is acetate + ATP + CoA = acetyl-CoA + AMP + diphosphate. Catalyzes the conversion of acetate into acetyl-CoA (AcCoA), an essential intermediate at the junction of anabolic and catabolic pathways. AcsA undergoes a two-step reaction. In the first half reaction, AcsA combines acetate with ATP to form acetyl-adenylate (AcAMP) intermediate. In the second half reaction, it can then transfer the acetyl group from AcAMP to the sulfhydryl group of CoA, forming the product AcCoA. The chain is Acetyl-coenzyme A synthetase from Xanthomonas campestris pv. campestris (strain 8004).